The chain runs to 414 residues: Procollagen C-endopeptidase enhancer 2 (414 aa).

Positions 1 to 22 (MGGASACIPLCLLLATARMARP) are cleaved as a signal peptide. Cystine bridges form between Cys32/Cys58, Cys85/Cys106, Cys153/Cys180, Cys207/Cys230, Cys296/Cys363, Cys300/Cys366, and Cys311/Cys414. 2 consecutive CUB domains span residues 32–143 (CGGI…YSAA) and 153–267 (CGGR…YKFR). The region spanning 296-414 (CQQKCRRMGT…PMNALKNKQC (119 aa)) is the NTR domain. Asn354 is a glycosylation site (N-linked (GlcNAc...) asparagine).

Interacts with heparin with high affinity, and type I or II collagen. O-glycosylated; contains sialic acid.

Its subcellular location is the secreted. Binds to the C-terminal propeptide of types I and II procollagens and may enhance the cleavage of that propeptide by BMP1. This is Procollagen C-endopeptidase enhancer 2 (Pcolce2) from Mus musculus (Mouse).